A 441-amino-acid chain; its full sequence is Probable D-serine dehydratase (441 aa).

Lys-115 carries the post-translational modification N6-(pyridoxal phosphate)lysine.

It belongs to the serine/threonine dehydratase family. DsdA subfamily. Requires pyridoxal 5'-phosphate as cofactor.

The enzyme catalyses D-serine = pyruvate + NH4(+). In Fusobacterium nucleatum subsp. nucleatum (strain ATCC 25586 / DSM 15643 / BCRC 10681 / CIP 101130 / JCM 8532 / KCTC 2640 / LMG 13131 / VPI 4355), this protein is Probable D-serine dehydratase.